Reading from the N-terminus, the 867-residue chain is Alanine--tRNA ligase (867 aa).

Positions 554, 558, 656, and 660 each coordinate Zn(2+).

Belongs to the class-II aminoacyl-tRNA synthetase family. Zn(2+) serves as cofactor.

The protein localises to the cytoplasm. It catalyses the reaction tRNA(Ala) + L-alanine + ATP = L-alanyl-tRNA(Ala) + AMP + diphosphate. Its function is as follows. Catalyzes the attachment of alanine to tRNA(Ala) in a two-step reaction: alanine is first activated by ATP to form Ala-AMP and then transferred to the acceptor end of tRNA(Ala). Also edits incorrectly charged Ser-tRNA(Ala) and Gly-tRNA(Ala) via its editing domain. The protein is Alanine--tRNA ligase of Methylococcus capsulatus (strain ATCC 33009 / NCIMB 11132 / Bath).